Reading from the N-terminus, the 378-residue chain is MAMNLENIVNQATAQYVKIKEHREPYTAHYNALKDKVYSEWKSSAVLGKLLKGSTLCGGYGDKLKVSIPDEFDLLIHLVFPENDKIIVKADASKPGNVILDMTKVMEIIGSQEHNKPVFDRLQKIVNNKKQLLEDKLNSFLESIMTQTLNKMGNQIEVAGRISHLQYKKCGPAHTIFVKGSCKYSVDFVPAIRLSAAQVVLAPEQRIHFGETLYWDAIPKPMKPAKTDNTSFTSSFYEAERRLLYGKQFLKPAIRLMKQNRNVKNKANLKSYHIKTLFLWQVIQQDPSYWSNSPKDIFIEMLGKLADSLALTPKKGKLPFFWDPKLDMFAQLTDSQRTDLYNHFRKCEYTFRKDNGNVNDCTENNVHSSFSKNTTYKL.

Mg(2+)-binding residues include Glu71, Asp73, and Asp187. 71–73 (EFD) serves as a coordination point for ATP. GTP is bound by residues Asp187 and 233–240 (TSSFYEAE). ATP contacts are provided by residues 237–240 (YEAE), Lys258, and 271–275 (SYHIK).

The protein belongs to the mab-21 family. The cofactor is Mg(2+). Mn(2+) serves as cofactor.

It catalyses the reaction GTP + ATP = 3',2'-cGAMP + 2 diphosphate. The catalysed reaction is GTP + ATP = pppA(2'-5')pG + diphosphate. The enzyme catalyses pppA(2'-5')pG = 3',2'-cGAMP + diphosphate. The enzyme activity is specifically activated by double-stranded RNA (dsRNA). Recognizes long dsRNA (&gt;30 bp) with no preference for 5' RNA phosphorylation. Its function is as follows. Nucleotidyltransferase that catalyzes the formation of cyclic GMP-AMP (3',2'-cGAMP) from ATP and GTP and plays a key role in antiviral innate immunity. Synthesizes 3',2'-cGAMP in a two-step reaction through production of the linear intermediate pppA(2'-5')pG. Acts as a key sensor of double-stranded RNA (dsRNA), the presence of dsRNA in the cytoplasm being a danger signal that triggers the immune responses. Directly binds dsRNA, activating the nucleotidyltransferase activity, leading to synthesis of 3',2'-cGAMP, a second messenger that binds to and activates Sting, thereby triggering the antiviral immune response via activation of the NF-kappa-B transcription factor Rel (Relish). 3',2'-cGAMP is protected from poxin cleavage. This Drosophila melanogaster (Fruit fly) protein is Cyclic GMP-AMP synthase-like receptor 1.